The following is a 156-amino-acid chain: Calglandulin (156 aa).

4 consecutive EF-hand domains span residues 8–43 (EQIT…IGIN), 44–79 (PTKR…YHEK), 82–117 (NQDE…AGEP), and 118–153 (LNEH…ESFK). Ca(2+) contacts are provided by Asp-131, Asp-133, Asp-135, Thr-137, and Glu-142.

It belongs to the calmodulin family. Calglandulin subfamily. As to expression, expressed by the venom gland.

The protein resides in the cytoplasm. Its function is as follows. May be involved in the cellular control mechanism of the secretion of toxins from the gland into the venom. In Tropidechis carinatus (Australian rough-scaled snake), this protein is Calglandulin.